A 323-amino-acid chain; its full sequence is MGNRVSREEFEWVYTDQPHAARRQEILAKYPEIKSLMKPDPNLIWIVTSMLLVQLASFYLVKDLDWKWLMFWSYAFGSCLNHSMTLAIHEISHNFPFGHHKAMWNRWFGMFANLSLGVPYSISFKRYHMDHHRYLGADGIDVDIPTDFEGWFFCTTLRKLVWVILQPLFYAFRPLFINPKPITHLEVINTVIQVTFDVLVYYVFGVKSLVYMLAASLLGLGLHPISGHFIAEHYMFLKGHETYSYYGPLNLLTFNVGYHNEHHDFPNVPGKNLPLVRKIASEYYDNLPHYNSWIRVLYDFVMDDTISPYSRMKRPPKGNEIQE.

G2 carries N-myristoyl glycine lipidation. Helical transmembrane passes span 41–61 (PNLI…FYLV) and 68–88 (WLMF…TLAI). Residues 89–93 (HEISH) carry the Histidine box-1 motif. Residues 104-124 (WNRWFGMFANLSLGVPYSISF) traverse the membrane as a helical segment. A Histidine box-2 motif is present at residues 128 to 132 (HMDHH). Helical transmembrane passes span 152-172 (FFCT…FYAF), 184-204 (HLEV…YYVF), and 210-230 (VYML…GHFI). The Histidine box-3 signature appears at 259 to 263 (HNEHH). Position 307 is a phosphoserine (S307).

Belongs to the fatty acid desaturase type 1 family. DEGS subfamily. In terms of assembly, interacts with RLBP1; the interaction increases synthesis of chromophore-precursors by DEGS1. In terms of processing, myristoylation can target the enzyme to the mitochondria leading to an increase in ceramide levels.

The protein resides in the mitochondrion membrane. It localises to the endoplasmic reticulum membrane. It catalyses the reaction an N-acylsphinganine + 2 Fe(II)-[cytochrome b5] + O2 + 2 H(+) = an N-acylsphing-4-enine + 2 Fe(III)-[cytochrome b5] + 2 H2O. It carries out the reaction all-trans-retinol = 11-cis-retinol. The enzyme catalyses all-trans-retinol = 9-cis-retinol. The catalysed reaction is all-trans-retinol = 13-cis-retinol. It catalyses the reaction 11-cis-retinol = 13-cis-retinol. It carries out the reaction 11-cis-retinol = 9-cis-retinol. In terms of biological role, has sphingolipid-delta-4-desaturase activity. Converts D-erythro-sphinganine to D-erythro-sphingosine (E-sphing-4-enine). Catalyzes the equilibrium isomerization of retinols. The chain is Sphingolipid delta(4)-desaturase DES1 from Rattus norvegicus (Rat).